The primary structure comprises 322 residues: ATP-dependent 6-phosphofructokinase (322 aa).

Residues G12, 73-74 (RF), and 103-106 (GDGT) each bind ATP. Residue D104 coordinates Mg(2+). 126 to 128 (TID) provides a ligand contact to substrate. The Proton acceptor role is filled by D128. Position 155 (R155) interacts with ADP. Residues R163 and 170–172 (MGR) contribute to the substrate site. ADP contacts are provided by residues 186 to 188 (GSE), K212, and 214 to 216 (KPS). Substrate contacts are provided by residues E223, R245, and 251-254 (HTQR).

It belongs to the phosphofructokinase type A (PFKA) family. ATP-dependent PFK group I subfamily. Prokaryotic clade 'B1' sub-subfamily. As to quaternary structure, homotetramer. It depends on Mg(2+) as a cofactor.

The protein localises to the cytoplasm. It catalyses the reaction beta-D-fructose 6-phosphate + ATP = beta-D-fructose 1,6-bisphosphate + ADP + H(+). Its pathway is carbohydrate degradation; glycolysis; D-glyceraldehyde 3-phosphate and glycerone phosphate from D-glucose: step 3/4. Allosterically activated by ADP and other diphosphonucleosides, and allosterically inhibited by phosphoenolpyruvate. In terms of biological role, catalyzes the phosphorylation of D-fructose 6-phosphate to fructose 1,6-bisphosphate by ATP, the first committing step of glycolysis. The protein is ATP-dependent 6-phosphofructokinase of Mesomycoplasma hyopneumoniae (strain 7448) (Mycoplasma hyopneumoniae).